The primary structure comprises 962 residues: Translation initiation factor IF-2 (962 aa).

The span at 52–77 shows a compositional bias: basic and acidic residues; it reads RSHGQADDSSRKKITLTKRETSEIRQ. Disordered regions lie at residues 52 to 87 and 121 to 378; these read RSHG…TRTV and AVEE…EPVV. The segment covering 78 to 87 has biased composition (polar residues); sequence SDGTGKTRTV. Basic and acidic residues-rich tracts occupy residues 123–183, 197–250, and 267–278; these read EEAR…KAEE, DSSR…EAEA, and PSERKAEEKKAE. Gly residues predominate over residues 342 to 355; it reads TSGGVGGWRGGPRG. Residues 462–631 enclose the tr-type G domain; the sequence is PRPPVVTVMG…LLQAEVLELT (170 aa). Residues 471 to 478 form a G1 region; sequence GHVDHGKT. GTP is bound at residue 471 to 478; the sequence is GHVDHGKT. The tract at residues 496-500 is G2; the sequence is GITQH. The interval 517–520 is G3; that stretch reads DTPG. GTP is bound by residues 517 to 521 and 571 to 574; these read DTPGH and NKID. Positions 571 to 574 are G4; the sequence is NKID. The segment at 607–609 is G5; the sequence is SAK.

It belongs to the TRAFAC class translation factor GTPase superfamily. Classic translation factor GTPase family. IF-2 subfamily.

It is found in the cytoplasm. One of the essential components for the initiation of protein synthesis. Protects formylmethionyl-tRNA from spontaneous hydrolysis and promotes its binding to the 30S ribosomal subunits. Also involved in the hydrolysis of GTP during the formation of the 70S ribosomal complex. In Cupriavidus necator (strain ATCC 17699 / DSM 428 / KCTC 22496 / NCIMB 10442 / H16 / Stanier 337) (Ralstonia eutropha), this protein is Translation initiation factor IF-2.